The primary structure comprises 135 residues: Lymphocyte antigen 6 complex locus protein G6d (135 aa).

An N-terminal signal peptide occupies residues 1–19 (MNSQLVGILLSALLGVALG). Residues 22–121 (TRCYDCGGGP…ASSVTPLCIL (100 aa)) enclose the UPAR/Ly6 domain. 5 cysteine pairs are disulfide-bonded: C24–C48, C27–C35, C42–C76, C82–C101, and C102–C107. O-linked (GalNAc...) threonine glycosylation is present at T68. N108 carries GPI-anchor amidated asparagine lipidation. The propeptide at 109–135 (SAVASSVTPLCILAAAVTTLAWLLPGL) is removed in mature form.

As to quaternary structure, homodimer. In terms of processing, O-glycosylated. As to expression, expressed in embryonic tissue and adult lung, kidney, brain, liver and spleen.

The protein resides in the cell membrane. It localises to the cell projection. Its subcellular location is the filopodium. The chain is Lymphocyte antigen 6 complex locus protein G6d (Ly6g6d) from Mus musculus (Mouse).